Consider the following 1462-residue polypeptide: DNA polymerase III PolC-type (1462 aa).

Residues 424–580 (YVVFDVETTG…YDAEATGRLL (157 aa)) enclose the Exonuclease domain.

Belongs to the DNA polymerase type-C family. PolC subfamily.

It localises to the cytoplasm. It catalyses the reaction DNA(n) + a 2'-deoxyribonucleoside 5'-triphosphate = DNA(n+1) + diphosphate. In terms of biological role, required for replicative DNA synthesis. This DNA polymerase also exhibits 3' to 5' exonuclease activity. The protein is DNA polymerase III PolC-type of Streptococcus sanguinis (strain SK36).